A 752-amino-acid polypeptide reads, in one-letter code: Glutamate carboxypeptidase 2 (752 aa).

Residues 1-19 (MWNAQQDSDSAEALGRRQR) lie on the Cytoplasmic side of the membrane. Residue Ser-10 is modified to Phosphoserine. A helical; Signal-anchor for type II membrane protein transmembrane segment spans residues 20-44 (WFCAGTLVLAFTGTFIIGFLFGWFI). At 45–752 (KPSNDSTSSV…AAAETLREVD (708 aa)) the chain is on the extracellular side. N-linked (GlcNAc...) asparagine glycans are attached at residues Asn-48, Asn-78, Asn-123, Asn-155, and Asn-197. The substrate site is built by Arg-212 and Asn-259. 2 residues coordinate Ca(2+): Thr-271 and Tyr-274. The NAALADase stretch occupies residues 276–589 (ANEYAYRHEF…QVRGAMVFEL (314 aa)). N-linked (GlcNAc...) asparagine glycosylation is present at Asn-338. Residues His-379 and Asp-389 each contribute to the Zn(2+) site. Glu-426 serves as a coordination point for substrate. The active-site Nucleophile; for NAALADase activity is the Glu-426. Glu-427 serves as a coordination point for Zn(2+). The Ca(2+) site is built by Glu-435 and Glu-438. A Zn(2+)-binding site is contributed by Asp-455. 2 N-linked (GlcNAc...) asparagine glycosylation sites follow: Asn-461 and Asn-478. Substrate is bound by residues 519–520 (SG), Asn-521, 536–538 (RAR), Tyr-554, and 554–555 (YH). His-555 is a binding site for Zn(2+). N-linked (GlcNAc...) asparagine glycosylation occurs at Asn-615. Catalysis depends on Ser-630, which acts as the Charge relay system. An N-linked (GlcNAc...) asparagine glycan is attached at Asn-640. Residues Asp-668 and His-691 each act as charge relay system in the active site. Residue 701–702 (KY) coordinates substrate.

It belongs to the peptidase M28 family. M28B subfamily. In terms of assembly, homodimer. It depends on Zn(2+) as a cofactor. As to expression, widely expressed throughout brain regions with highest levels in the hippocampus, dentate gyrus, priform cortex, choroid plexus of ventricles, pineal gland, anterior lobe of the pituitary gland and supraoptic nucleus. High levels also found in the cerebral cortex, substantia nigra, pontine nucleus and the granule cell layer of cerebellum. Highly expressed in astrocytes and non-myelinating Schwann cells. Also expressed in kidney, localizing to the proximal brush border of the renal tube.

It is found in the cell membrane. It carries out the reaction Release of an unsubstituted, C-terminal glutamyl residue, typically from Ac-Asp-Glu or folylpoly-gamma-glutamates.. Its activity is regulated as follows. The NAALADase activity is inhibited by beta-NAAG, quisqualic acid and 2-(phosphonomethyl)glutaric acid (PMG). In terms of biological role, has both folate hydrolase and N-acetylated-alpha-linked-acidic dipeptidase (NAALADase) activity. Has a preference for tri-alpha-glutamate peptides. In the intestine, required for the uptake of folate. In the brain, modulates excitatory neurotransmission through the hydrolysis of the neuropeptide, N-aceylaspartylglutamate (NAAG), thereby releasing glutamate. Also exhibits a dipeptidyl-peptidase IV type activity. In vitro, cleaves Gly-Pro-AMC. The chain is Glutamate carboxypeptidase 2 (Folh1) from Rattus norvegicus (Rat).